Consider the following 343-residue polypeptide: Heme A synthase (343 aa).

The next 8 membrane-spanning stretches (helical) occupy residues 13 to 33 (VALWLFVVAVLVFAMVVVGGA), 96 to 116 (HRLLGRLVGVVFAIPFVFFLI), 130 to 150 (VLLGLGGLQGVVGWWMVSSGL), 165 to 185 (LGLALALFVFVIWTALDAWAG), 197 to 217 (GWALAFLGAVFFQSLLGALVA), 258 to 278 (LHHRLMAYALFVAAIVAGVAA), 290 to 310 (LTAFVLVGVVCLQAGLGIWTL), and 311 to 331 (MTAVPLALGVLHQAGAAILLA). A heme-binding site is contributed by His260. His322 contacts heme.

Belongs to the COX15/CtaA family. Type 2 subfamily. Interacts with CtaB. Requires heme b as cofactor.

It is found in the cell membrane. The enzyme catalyses Fe(II)-heme o + 2 A + H2O = Fe(II)-heme a + 2 AH2. The protein operates within porphyrin-containing compound metabolism; heme A biosynthesis; heme A from heme O: step 1/1. Catalyzes the conversion of heme O to heme A by two successive hydroxylations of the methyl group at C8. The first hydroxylation forms heme I, the second hydroxylation results in an unstable dihydroxymethyl group, which spontaneously dehydrates, resulting in the formyl group of heme A. This chain is Heme A synthase, found in Caulobacter sp. (strain K31).